Reading from the N-terminus, the 272-residue chain is Putative bark agglutinin LECRPA3 (272 aa).

The signal sequence occupies residues Pro1–Ser29. 3 N-linked (GlcNAc...) asparagine glycosylation sites follow: Asn36, Asn39, and Asn65. 2 residues coordinate Mn(2+): Glu150 and Asp152. The Ca(2+) site is built by Asp152, Tyr154, Asn156, and Asp159. Residues Asp159 and His164 each coordinate Mn(2+).

The protein belongs to the leguminous lectin family. As to quaternary structure, homotetramer. As to expression, weak expression in bark. The lectin accumulates in the inner bark in autumn.

In terms of biological role, bark lectins are storage proteins that probably maintain stocks of nitrogen during dormant period. Self-aggregatable molecules that can bind their own carbohydrate side chains. They could also play a role in the plant's defense against phytophagous invertebrates or herbivorous higher animals. The polypeptide is Putative bark agglutinin LECRPA3 (Robinia pseudoacacia (Black locust)).